The primary structure comprises 552 residues: Iduronate 2-sulfatase (552 aa).

The signal sequence occupies residues 1–29; it reads MSPPPPPPIWRQLSFSLLLGSFCIALESA. Residues 30 to 35 constitute a propeptide that is removed on maturation; it reads AQGNSA. Positions 47, 48, and 86 each coordinate Ca(2+). Residue C86 is the Nucleophile of the active site. Position 86 is a 3-oxoalanine (Cys) (C86). N117 carries N-linked (GlcNAc...) asparagine glycosylation. Residue H140 is part of the active site. N-linked (GlcNAc...) asparagine glycosylation occurs at N146. A disulfide bridge connects residues C173 and C186. N248 and N282 each carry an N-linked (GlcNAc...) asparagine glycan. Ca(2+) is bound by residues D336 and H337. C424 and C434 are oxidised to a cystine. N515 and N539 each carry an N-linked (GlcNAc...) asparagine glycan.

The protein belongs to the sulfatase family. Monomer. The 58-kDa mature form is composed of two chains resulting from proteolitic processing, the 42-kDa chain and the 14-kDa chain that remain stably associated and form the 58-kDa intermediate form which is enzymatically active. Ca(2+) is required as a cofactor. Post-translationally, synthesized as a 75-kDa precursor form in the endoplasmic reticulum (ER), and then processed by proteolytic cleavage through various intermediates to yield a 55-kDa mature form, with the release of an 18 kDa polypeptide. The conversion to 3-oxoalanine (also known as C-formylglycine, FGly), of a serine or cysteine residue in prokaryotes and of a cysteine residue in eukaryotes, is critical for catalytic activity. Found to be expressed in alpha and beta pancreatic cells.

The protein localises to the lysosome. The catalysed reaction is Hydrolysis of the 2-sulfate groups of the L-iduronate 2-sulfate units of dermatan sulfate, heparan sulfate and heparin.. Functionally, lysosomal enzyme involved in the degradation pathway of dermatan sulfate and heparan sulfate. The sequence is that of Iduronate 2-sulfatase (Ids) from Mus musculus (Mouse).